The primary structure comprises 3419 residues: Genome polyprotein (3419 aa).

Positions Met-1 to Asn-25 are disordered. At Met-1–Arg-104 the chain is on the cytoplasmic side. Residues Leu-37–Val-72 form a hydrophobic; homodimerization of capsid protein C region. Positions Gly-105–Ala-122 are cleaved as a propeptide — ER anchor for capsid protein C, removed in mature form by serine protease NS3. The chain crosses the membrane as a helical span at residues Gly-105–Ile-125. Over Thr-126–Asn-249 the chain is Extracellular. An N-linked (GlcNAc...) asparagine; by host glycan is attached at Asn-192. Residues Trp-250–Gly-269 traverse the membrane as a helical segment. Over Ser-270–Gln-274 the chain is Cytoplasmic. A helical membrane pass occupies residues Lys-275 to Ser-290. Residues Ile-291–Ser-741 are Extracellular-facing. Cys-293 and Cys-320 are joined by a disulfide. Lys-328 participates in a covalent cross-link: Glycyl lysine isopeptide (Lys-Gly) (interchain with G-Cter in ubiquitin). 7 disulfide bridges follow: Cys-350–Cys-406, Cys-350–Cys-411, Cys-364–Cys-395, Cys-382–Cys-406, Cys-382–Cys-411, Cys-476–Cys-577, and Cys-594–Cys-625. Residues Asp-388 to Gly-401 are fusion peptide. A Glycyl lysine isopeptide (Lys-Gly) (interchain with G-Cter in ubiquitin) cross-link involves residue Lys-567. The helical transmembrane segment at Leu-742 to Leu-763 threads the bilayer. Over Asn-764 to Ser-769 the chain is Cytoplasmic. A helical membrane pass occupies residues Ile-770–Ala-790. The Lumenal segment spans residues Asp-791–Lys-1173. 6 disulfide bridges follow: Cys-794–Cys-805, Cys-845–Cys-933, Cys-969–Cys-1013, Cys-1070–Cys-1119, Cys-1081–Cys-1102, and Cys-1103–Cys-1106. Residues Asn-920 and Asn-997 are each glycosylated (N-linked (GlcNAc...) asparagine; by host). A helical membrane pass occupies residues Ile-1174 to Ser-1194. At Asp-1195–Val-1216 the chain is on the cytoplasmic side. The helical transmembrane segment at Ala-1217 to Phe-1237 threads the bilayer. Over Arg-1238 to Asp-1266 the chain is Lumenal. The helical transmembrane segment at Leu-1267–Pro-1287 threads the bilayer. The Cytoplasmic segment spans residues Arg-1288 to Asn-1291. Residues Ile-1292 to Trp-1312 form a helical membrane-spanning segment. At Arg-1313 to Met-1341 the chain is on the lumenal side. A helical transmembrane segment spans residues Ala-1342–Leu-1362. The Cytoplasmic portion of the chain corresponds to Thr-1363 to Ser-1369. A helical transmembrane segment spans residues Trp-1370–Ala-1390. Over Lys-1391 to Asp-1393 the chain is Lumenal. A helical transmembrane segment spans residues Ile-1394 to Gly-1414. The Cytoplasmic portion of the chain corresponds to Lys-1415–Lys-1468. Positions Ile-1421 to Pro-1460 are interacts with and activates NS3 protease. The disordered stretch occupies residues Gly-1425–Asp-1447. The helical intramembrane region spans Val-1469–Trp-1489. Over Tyr-1490–Thr-2166 the chain is Lumenal. Residues Ser-1499–Cys-1676 enclose the Peptidase S7 domain. Residues His-1549, Asp-1573, and Ser-1633 each act as charge relay system; for serine protease NS3 activity in the active site. Residues Pro-1679–Glu-1835 enclose the Helicase ATP-binding domain. The tract at residues Lys-1683 to Gln-1686 is important for RNA-binding. Leu-1692–Thr-1699 contributes to the ATP binding site. A DEAH box motif is present at residues Asp-1783 to His-1786. Residues Pro-1830–Glu-2009 enclose the Helicase C-terminal domain. At Lys-1887 the chain carries N6-acetyllysine; by host. Residues Leu-2167–Leu-2187 form a helical membrane-spanning segment. The Lumenal segment spans residues Met-2188 to Lys-2191. The helical intramembrane region spans Gly-2192–Leu-2212. The Cytoplasmic portion of the chain corresponds to Ser-2213–Glu-2214. A helical transmembrane segment spans residues Ile-2215 to Ile-2235. The Lumenal segment spans residues Pro-2236–Ala-2250. Residues Ile-2251–Ala-2265 constitute an intramembrane region (helical). Residues Asn-2266–Ser-2303 are Lumenal-facing. The helical intramembrane region spans Ala-2304–Thr-2324. At Thr-2325–Gly-2340 the chain is on the lumenal side. The chain crosses the membrane as a helical span at residues Val-2341–Leu-2361. Residues Met-2362–Pro-2371 are Cytoplasmic-facing. Residues Leu-2372–Leu-2392 form a helical membrane-spanning segment. The Lumenal portion of the chain corresponds to Gln-2393–Gln-2437. A helical membrane pass occupies residues Val-2438–Gly-2458. At Glu-2459 to Leu-3419 the chain is on the cytoplasmic side. The mRNA cap 0-1 NS5-type MT domain maps to Gly-2517–Ala-2781. MRNA is bound by residues Lys-2529, Leu-2532, Asn-2533, Met-2535, Phe-2540, and Lys-2544. Lys-2529–Met-2535 contacts GTP. Ser-2572 is an S-adenosyl-L-methionine binding site. A Phosphoserine modification is found at Ser-2572. The active-site For 2'-O-MTase activity is the Lys-2577. An SUMO-interacting motif (SIM) region spans residues Val-2593–Leu-2596. S-adenosyl-L-methionine is bound by residues Gly-2602, Trp-2603, Thr-2620, Lys-2621, His-2626, Glu-2627, Asp-2647, Val-2648, Asp-2662, and Ile-2663. Asp-2662 (for 2'-O-MTase activity) is an active-site residue. Glu-2665–Glu-2671 provides a ligand contact to GTP. Ser-2666 is an mRNA binding site. Lys-2698 (for 2'-O-MTase activity) is an active-site residue. MRNA-binding residues include Arg-2729 and Ser-2731. Residue Arg-2729–Ser-2731 participates in GTP binding. The For 2'-O-MTase activity role is filled by Glu-2734. Residue Tyr-2736 coordinates S-adenosyl-L-methionine. A Nuclear localization signal (NLS) motif is present at residues Lys-2904 to Val-2910. Glu-2955, His-2959, Cys-2964, and Cys-2967 together coordinate Zn(2+). The RdRp catalytic domain maps to Gly-3045–Ala-3195. His-3230, Cys-3246, and Cys-3365 together coordinate Zn(2+).

The protein in the N-terminal section; belongs to the class I-like SAM-binding methyltransferase superfamily. mRNA cap 0-1 NS5-type methyltransferase family. In terms of assembly, homodimer. Interacts with host SERTAD3; this interaction promotes capsid protein C degradation. Interacts with host CAPRIN1; this interaction is probably linked to the inhibition of stress granules formation by the virus. Interacts with host G3BP1; this interaction is probably linked to the inhibition of stress granules formation by the virus. Forms heterodimers with envelope protein E in the endoplasmic reticulum and Golgi. Interacts with non-structural protein 2A. As to quaternary structure, homodimer; in the endoplasmic reticulum and Golgi. Interacts with host TYRO3, AXL and DC-SIGN proteins. Interacts with non-structural protein 2A. Interacts with host HAVCR1; this interaction likely mediates virus attachment to host cell. Interacts with host NCAM1. Interacts with host HSPA5. Interacts with Aedes aegypti SRPN25, APY and venom allergen-1 salivary proteins; the interactions do not affect Zika virus replication in human endothelial cells and keratinocytes. In terms of assembly, homodimer; Homohexamer when secreted. Interacts with host TBK1. Interacts with host USP8. Interacts with envelope protein E. Interacts with host HSPA5. Interacts with the structural protein prM/E complex, and the NS2B/NS3 protease complex. As to quaternary structure, forms a heterodimer with serine protease NS3. May form homooligomers. Interacts with human SPCS1. Interacts with non-structural protein 2A. In terms of assembly, forms a heterodimer with NS2B. Interacts with NS4B. Interacts with unphosphorylated RNA-directed RNA polymerase NS5; this interaction stimulates RNA-directed RNA polymerase NS5 guanylyltransferase activity. Interacts with non-structural protein 2A. Interacts with host SHFL; this interaction promotes NS3 degradation via a lysosome-dependent pathway. Interacts with host CEP63; this interaction disorganizes the centrosome and inhibits host innate immune response. May interact with host ANKLE2; the interaction may cause defects in brain development, such as microcephaly. May interact with host SRPRA and SEC61G. As to quaternary structure, interacts with serine protease NS3. Interacts with NS1. Interacts with host TBK1. In terms of assembly, homodimer. Interacts with host STAT2; this interaction inhibits the phosphorylation of the latter, and, when all viral proteins are present (polyprotein), targets STAT2 for degradation. Interacts with host TBK1 and IKBKE; these interactions lead to the inhibition of the host RIG-I signaling pathway. Interacts with host KPNA2. Interacts with host PAF1 complex; the interaction may prevent the recruitment of the host PAF1 complex to interferon-responsive genes, and thus reduces the immune response. Interacts with serine protease NS3. Interacts with host ZSWIM8; this interaction allows STAT2 binding to ZSWIM8 and subsequent proteasomal degradation leading to inhibition of interferon signaling. Post-translationally, specific enzymatic cleavages in vivo yield mature proteins. Cleavages in the lumen of endoplasmic reticulum are performed by host signal peptidase, whereas cleavages in the cytoplasmic side are performed by serine protease NS3. Signal cleavage at the 2K-4B site requires a prior NS3 protease-mediated cleavage at the 4A-2K site. In terms of processing, cleaved in post-Golgi vesicles by a host furin, releasing the mature small envelope protein M, and peptide pr. This cleavage is incomplete as up to 30% of viral particles still carry uncleaved prM. N-glycosylation plays a role in virulence in mammalian and mosquito hosts, but may have no effect on neurovirulence. Post-translationally, ubiquitination by host TRIM7 promotes virus attachment and fusion of the virus and the host endosome membrane. In terms of processing, N-glycosylated. The excreted form is glycosylated, which is required for efficient secretion of the protein from infected cells. Acetylated by host KAT5. Acetylation modulates NS3 RNA-binding and unwinding activities and plays an important positive role for viral replication. Post-translationally, phosphorylated on serines residues. This phosphorylation may trigger NS5 nuclear localization. In terms of processing, sumoylated, required for regulating IFN induced interferon stimulated genes/ISGs.

Its subcellular location is the virion. The protein resides in the host nucleus. The protein localises to the host cytoplasm. It is found in the host perinuclear region. It localises to the secreted. Its subcellular location is the virion membrane. The protein resides in the host endoplasmic reticulum membrane. The catalysed reaction is Selective hydrolysis of -Xaa-Xaa-|-Yaa- bonds in which each of the Xaa can be either Arg or Lys and Yaa can be either Ser or Ala.. It catalyses the reaction RNA(n) + a ribonucleoside 5'-triphosphate = RNA(n+1) + diphosphate. It carries out the reaction a ribonucleoside 5'-triphosphate + H2O = a ribonucleoside 5'-diphosphate + phosphate + H(+). The enzyme catalyses ATP + H2O = ADP + phosphate + H(+). The catalysed reaction is a 5'-end (5'-triphosphoguanosine)-ribonucleoside in mRNA + S-adenosyl-L-methionine = a 5'-end (N(7)-methyl 5'-triphosphoguanosine)-ribonucleoside in mRNA + S-adenosyl-L-homocysteine. It catalyses the reaction a 5'-end (N(7)-methyl 5'-triphosphoguanosine)-ribonucleoside in mRNA + S-adenosyl-L-methionine = a 5'-end (N(7)-methyl 5'-triphosphoguanosine)-(2'-O-methyl-ribonucleoside) in mRNA + S-adenosyl-L-homocysteine + H(+). Its function is as follows. Plays a role in virus budding by binding to the host cell membrane and packages the viral RNA into a nucleocapsid that forms the core of the mature virus particle. During virus entry, may induce genome penetration into the host cytoplasm after hemifusion induced by the surface proteins. Can migrate to the cell nucleus where it modulates host functions. Inhibits the integrated stress response (ISR) in the infected cell. Inhibits RNA silencing by interfering with host Dicer. In terms of biological role, prevents premature fusion activity of envelope proteins in trans-Golgi by binding to envelope protein E at pH 6.0. After virion release in extracellular space, gets dissociated from E dimers. Functionally, plays a role in host immune defense modulation and protection of envelope protein E during virion synthesis. PrM-E cleavage is inefficient, many virions are only partially matured and immature prM-E proteins could play a role in immune evasion. Contributes to fetal microcephaly in humans. Acts as a chaperone for envelope protein E during intracellular virion assembly by masking and inactivating envelope protein E fusion peptide. prM is the only viral peptide matured by host furin in the trans-Golgi network probably to avoid catastrophic activation of the viral fusion activity in acidic Golgi compartment prior to virion release. Its function is as follows. May play a role in virus budding. Exerts cytotoxic effects by activating a mitochondrial apoptotic pathway through M ectodomain. May display a viroporin activity. Binds to host cell surface receptors and mediates fusion between viral and cellular membranes. Efficient virus attachment to cell is, at least in part, mediated by host HAVCR1 in a cell-type specific manner. In addition, host NCAM1 can also be used as entry receptor. Interaction with host HSPA5 plays an important role in the early stages of infection as well. Envelope protein is synthesized in the endoplasmic reticulum and forms a heterodimer with protein prM. The heterodimer plays a role in virion budding in the ER, and the newly formed immature particle is covered with 60 spikes composed of heterodimers between precursor prM and envelope protein E. The virion is transported to the Golgi apparatus where the low pH causes the dissociation of PrM-E heterodimers and formation of E homodimers. PrM-E cleavage is inefficient, many virions are only partially matured and immature prM-E proteins could play a role in immune evasion. In terms of biological role, plays a role in the inhibition of host RLR-induced interferon-beta activation by targeting TANK-binding kinase 1/TBK1. In addition, recruits the host deubiquitinase USP8 to cleave 'Lys-11'-linked polyubiquitin chains from caspase-1/CASP1 thus inhibiting its proteasomal degradation. In turn, stabilized CASP1 promotes cleavage of cGAS, which inhibits its ability to recognize mitochondrial DNA release and initiate type I interferon signaling. Functionally, component of the viral RNA replication complex that recruits genomic RNA, the structural protein prM/E complex, and the NS2B/NS3 protease complex to the virion assembly site and orchestrates virus morphogenesis. Antagonizes also the host MDA5-mediated induction of alpha/beta interferon antiviral response. May disrupt adherens junction formation and thereby impair proliferation of radial cells in the host cortex. Its function is as follows. Required cofactor for the serine protease function of NS3. Displays three enzymatic activities: serine protease, NTPase and RNA helicase. NS3 serine protease, in association with NS2B, performs its autocleavage and cleaves the polyprotein at dibasic sites in the cytoplasm: C-prM, NS2A-NS2B, NS2B-NS3, NS3-NS4A, NS4A-2K and NS4B-NS5. NS3 RNA helicase binds RNA and unwinds dsRNA in the 3' to 5' direction. Leads to translation arrest when expressed ex vivo. Disrupts host centrosome organization in a CEP63-dependent manner to degrade host TBK1 and inhibits innate immune response. Inhibits the integrated stress response (ISR) in the infected cell. In terms of biological role, regulates the ATPase activity of the NS3 helicase activity. NS4A allows NS3 helicase to conserve energy during unwinding. Cooperatively with NS4B suppresses the Akt-mTOR pathway and leads to cellular dysregulation. By inhibiting host ANKLE2 functions, may cause defects in brain development, such as microcephaly. Also antagonizes the host MDA5-mediated induction of alpha/beta interferon antiviral response. Inhibits the integrated stress response (ISR) in the infected cell. Functionally, functions as a signal peptide for NS4B and is required for the interferon antagonism activity of the latter. Its function is as follows. Induces the formation of ER-derived membrane vesicles where the viral replication takes place. Also plays a role in the inhibition of host RLR-induced interferon-beta production at TANK-binding kinase 1/TBK1 level. Cooperatively with NS4A suppresses the Akt-mTOR pathway and leads to cellular dysregulation. Replicates the viral (+) and (-) RNA genome, and performs the capping of genomes in the cytoplasm. Methylates viral RNA cap at guanine N-7 and ribose 2'-O positions. Once sufficient NS5 is expressed, binds to the cap-proximal structure and inhibits further translation of the viral genome. Besides its role in RNA genome replication, also prevents the establishment of a cellular antiviral state by blocking the interferon-alpha/beta (IFN-alpha/beta) signaling pathway. Mechanistically, interferes with host kinases TBK1 and IKKE upstream of interferon regulatory factor 3/IRF3 to inhibit the RIG-I pathway. Also antagonizes type I interferon signaling by targeting STAT2 for degradation by the proteasome thereby preventing activation of JAK-STAT signaling pathway. Mechanistically, acts as a scaffold protein to connect host ZSWIM8/CUL3 ligase complex and STAT2, leading to STAT2 degradation. Within the host nucleus, disrupts host SUMO1 and STAT2 co-localization with PML, resulting in PML degradation. May also reduce immune responses by preventing the recruitment of the host PAF1 complex to interferon-responsive genes. In Aedes aegypti (Yellowfever mosquito), this protein is Genome polyprotein.